We begin with the raw amino-acid sequence, 150 residues long: Large ribosomal subunit protein uL15 (150 aa).

Residues 1–60 (MKLSDLRPNPGANKRRKRVGRGPGSGHGKTATRGHKGQKSRSGGLKDPRRFEGGRSTTLM) are disordered. Residues 30 to 39 (TATRGHKGQK) show a composition bias toward basic residues. Residues 44-53 (GLKDPRRFEG) show a composition bias toward basic and acidic residues.

The protein belongs to the universal ribosomal protein uL15 family. Part of the 50S ribosomal subunit.

Binds to the 23S rRNA. The protein is Large ribosomal subunit protein uL15 of Thermus thermophilus (strain ATCC BAA-163 / DSM 7039 / HB27).